The following is a 546-amino-acid chain: FAD-dependent monooxygenase (546 aa).

A signal peptide spans 1 to 17 (MYDVIVVGAGWCGLAAA). Ile106 serves as a coordination point for FAD. N-linked (GlcNAc...) asparagine glycans are attached at residues Asn239 and Asn343.

This sequence belongs to the FAD-binding monooxygenase family. Requires FAD as cofactor.

It functions in the pathway antifungal biosynthesis. Functionally, FAD-dependent monooxygenase; part of the gene cluster that mediates the biosynthesis of the tetrahydropyranyl antifungal agent lanomycin that acts as an inhibitor of CYP51 and blocks the ergosterol biosynthesis. The biosynthesis probably begins with the formation of an hexaketide, followed by methionine mediated alkylation of C-2 and C-6, and methylation of the reduced C-3 oxygen, pyran forming reductive ring closure, oxygenation of C-4, beta-keto reduction, enoyl reduction and dehydration of the remaining oxygens, and finally, acylation with glycine to complete the biosynthesis. The polypeptide is FAD-dependent monooxygenase (Pyrenophora dematioidea (Helminthosporium dematioideum)).